The primary structure comprises 236 residues: Phosphoribosylformylglycinamidine synthase subunit PurQ (236 aa).

A Glutamine amidotransferase type-1 domain is found at 3 to 234 (FGVIVFPGSN…VDWWERGERL (232 aa)). Residue Cys-86 is the Nucleophile of the active site. Residues His-203 and Glu-205 contribute to the active site.

In terms of assembly, part of the FGAM synthase complex composed of 1 PurL, 1 PurQ and 2 PurS subunits.

It localises to the cytoplasm. It carries out the reaction N(2)-formyl-N(1)-(5-phospho-beta-D-ribosyl)glycinamide + L-glutamine + ATP + H2O = 2-formamido-N(1)-(5-O-phospho-beta-D-ribosyl)acetamidine + L-glutamate + ADP + phosphate + H(+). The enzyme catalyses L-glutamine + H2O = L-glutamate + NH4(+). It participates in purine metabolism; IMP biosynthesis via de novo pathway; 5-amino-1-(5-phospho-D-ribosyl)imidazole from N(2)-formyl-N(1)-(5-phospho-D-ribosyl)glycinamide: step 1/2. Its function is as follows. Part of the phosphoribosylformylglycinamidine synthase complex involved in the purines biosynthetic pathway. Catalyzes the ATP-dependent conversion of formylglycinamide ribonucleotide (FGAR) and glutamine to yield formylglycinamidine ribonucleotide (FGAM) and glutamate. The FGAM synthase complex is composed of three subunits. PurQ produces an ammonia molecule by converting glutamine to glutamate. PurL transfers the ammonia molecule to FGAR to form FGAM in an ATP-dependent manner. PurS interacts with PurQ and PurL and is thought to assist in the transfer of the ammonia molecule from PurQ to PurL. This chain is Phosphoribosylformylglycinamidine synthase subunit PurQ, found in Moorella thermoacetica (strain ATCC 39073 / JCM 9320).